A 141-amino-acid chain; its full sequence is Large ribosomal subunit protein uL11 (141 aa).

This sequence belongs to the universal ribosomal protein uL11 family. Part of the ribosomal stalk of the 50S ribosomal subunit. Interacts with L10 and the large rRNA to form the base of the stalk. L10 forms an elongated spine to which L12 dimers bind in a sequential fashion forming a multimeric L10(L12)X complex. In terms of processing, one or more lysine residues are methylated.

Forms part of the ribosomal stalk which helps the ribosome interact with GTP-bound translation factors. In Methylacidiphilum infernorum (isolate V4) (Methylokorus infernorum (strain V4)), this protein is Large ribosomal subunit protein uL11.